Reading from the N-terminus, the 236-residue chain is Peptidase E (236 aa).

Catalysis depends on charge relay system residues S122, D137, and H159.

Belongs to the peptidase S51 family.

It is found in the cytoplasm. It carries out the reaction Dipeptidase E catalyzes the hydrolysis of dipeptides Asp-|-Xaa. It does not act on peptides with N-terminal Glu, Asn or Gln, nor does it cleave isoaspartyl peptides.. Hydrolyzes dipeptides containing N-terminal aspartate residues. May play a role in allowing the cell to use peptide aspartate to spare carbon otherwise required for the synthesis of the aspartate family of amino acids. This is Peptidase E from Shewanella sp. (strain ANA-3).